Here is a 359-residue protein sequence, read N- to C-terminus: RNA-binding protein 4B (359 aa).

RRM domains are found at residues 2–72 and 78–148; these read VKLF…ASKN and TKLH…LSTS. The segment at 160–177 adopts a CCHC-type zinc-finger fold; sequence SGCYRCGKEGHWSKECPV. The interaction with TNPO3 stretch occupies residues 196–359; it reads AVRPPYTMGY…YVDRARYSAF (164 aa).

In terms of assembly, interacts with TNPO3, which may mediate nuclear import of the protein.

The protein resides in the nucleus. Its subcellular location is the nucleolus. Functionally, required for the translational activation of PER1 mRNA in response to circadian clock. Binds directly to the 3'-UTR of the PER1 mRNA. The chain is RNA-binding protein 4B (RBM4B) from Sus scrofa (Pig).